A 249-amino-acid polypeptide reads, in one-letter code: Putative SAP domain-containing protein 049L (249 aa).

Composition is skewed to basic and acidic residues over residues 1–12 (MAAPKAEGEDKP), 22–38 (PKPE…KEFC), and 95–107 (KKAE…KLDE). The disordered stretch occupies residues 1 to 110 (MAAPKAEGED…DDKKLDEATG (110 aa)). An SAP domain is found at 119-153 (LSKLTIQTLKGMCKTRNLKISGNKAALVQRLIEAD).

This chain is Putative SAP domain-containing protein 049L, found in Frog virus 3 (isolate Goorha) (FV-3).